The primary structure comprises 125 residues: Small ribosomal subunit protein uS13 (125 aa).

This sequence belongs to the universal ribosomal protein uS13 family. As to quaternary structure, part of the 30S ribosomal subunit. Forms a loose heterodimer with protein S19. Forms two bridges to the 50S subunit in the 70S ribosome.

Located at the top of the head of the 30S subunit, it contacts several helices of the 16S rRNA. In the 70S ribosome it contacts the 23S rRNA (bridge B1a) and protein L5 of the 50S subunit (bridge B1b), connecting the 2 subunits; these bridges are implicated in subunit movement. Contacts the tRNAs in the A and P-sites. The chain is Small ribosomal subunit protein uS13 from Rickettsia rickettsii (strain Iowa).